Here is a 206-residue protein sequence, read N- to C-terminus: Superoxide dismutase [Mn] (206 aa).

Residues His-27, His-82, Asp-168, and His-172 each contribute to the Mn(2+) site.

This sequence belongs to the iron/manganese superoxide dismutase family. Homodimer. Requires Mn(2+) as cofactor.

The enzyme catalyses 2 superoxide + 2 H(+) = H2O2 + O2. Its function is as follows. Destroys superoxide anion radicals which are normally produced within the cells and which are toxic to biological systems. The protein is Superoxide dismutase [Mn] (sodA) of Escherichia coli (strain K12).